The chain runs to 85 residues: Toxin BmKaIT1 (85 aa).

A signal peptide spans 1 to 19 (MNYLVMISFAFLLMTGVES). Residues 21 to 83 (RDAYIAQNYN…VPIRVPGKCH (63 aa)) form the LCN-type CS-alpha/beta domain. Cystine bridges form between Cys-31/Cys-82, Cys-35/Cys-55, Cys-41/Cys-65, and Cys-45/Cys-67. Residues 84 to 85 (RR) constitute a propeptide, removed by a carboxypeptidase.

It belongs to the long (4 C-C) scorpion toxin superfamily. Sodium channel inhibitor family. Alpha subfamily. As to expression, expressed by the venom gland.

It is found in the secreted. In terms of biological role, alpha toxins bind voltage-independently at site-3 of sodium channels (Nav) and inhibit the inactivation of the activated channels, thereby blocking neuronal transmission. Shows a high toxicity toward insects and moderate toxicity against mammals. The chain is Toxin BmKaIT1 from Olivierus martensii (Manchurian scorpion).